The following is a 145-amino-acid chain: MTMVNIINGPNLGRLGRREPDVYGSTTHEQLSALIERAAVEFGIKAVVRQSDSESQLLDWIHLAADAGEPVILNAGGLTHTSVALRDACAELSAPFIEVHISNVHAREEFRRHSYLSPLATGVITGLGVQGYLLALRYLAEIAGN.

The active-site Proton acceptor is Tyr-23. Positions 74, 80, and 87 each coordinate substrate. Catalysis depends on His-100, which acts as the Proton donor. Substrate contacts are provided by residues 101–102 (IS) and Arg-111.

This sequence belongs to the type-II 3-dehydroquinase family. In terms of assembly, homododecamer.

It catalyses the reaction 3-dehydroquinate = 3-dehydroshikimate + H2O. The protein operates within metabolic intermediate biosynthesis; chorismate biosynthesis; chorismate from D-erythrose 4-phosphate and phosphoenolpyruvate: step 3/7. Its function is as follows. Catalyzes a trans-dehydration via an enolate intermediate. This Mycobacterium leprae (strain Br4923) protein is 3-dehydroquinate dehydratase.